The following is a 385-amino-acid chain: Phosphate acyltransferase (385 aa).

Positions 1–17 are enriched in low complexity; the sequence is MAAGTSIGTTPGGSTSP. The disordered stretch occupies residues 1–28; that stretch reads MAAGTSIGTTPGGSTSPETPPEHGLTGT.

Belongs to the PlsX family. Homodimer. Probably interacts with PlsY.

The protein resides in the cytoplasm. The catalysed reaction is a fatty acyl-[ACP] + phosphate = an acyl phosphate + holo-[ACP]. It participates in lipid metabolism; phospholipid metabolism. Functionally, catalyzes the reversible formation of acyl-phosphate (acyl-PO(4)) from acyl-[acyl-carrier-protein] (acyl-ACP). This enzyme utilizes acyl-ACP as fatty acyl donor, but not acyl-CoA. This is Phosphate acyltransferase from Dinoroseobacter shibae (strain DSM 16493 / NCIMB 14021 / DFL 12).